The sequence spans 418 residues: Aspartate aminotransferase, cytoplasmic (418 aa).

Ser-2 bears the N-acetylserine mark. Residues Gly-38, Trp-135, and Asn-188 each coordinate L-aspartate. Lys-255 is modified (N6-(pyridoxal phosphate)lysine). Arg-387 serves as a coordination point for L-aspartate. A Phosphoserine modification is found at Ser-389.

Belongs to the class-I pyridoxal-phosphate-dependent aminotransferase family. As to quaternary structure, homodimer. Pyridoxal 5'-phosphate serves as cofactor.

The protein localises to the cytoplasm. It is found in the peroxisome. The enzyme catalyses L-aspartate + 2-oxoglutarate = oxaloacetate + L-glutamate. In terms of biological role, plays a key role in amino acid metabolism. This chain is Aspartate aminotransferase, cytoplasmic (AAT2), found in Saccharomyces cerevisiae (strain ATCC 204508 / S288c) (Baker's yeast).